The primary structure comprises 672 residues: Poly-beta-1,6-N-acetyl-D-glucosamine N-deacetylase (672 aa).

Positions 1-20 (MLRNGNKYLLMLVSIIMLTA) are cleaved as a signal peptide. Cysteine 21 carries N-palmitoyl cysteine lipidation. Cysteine 21 is lipidated: S-diacylglycerol cysteine. The NodB homology domain occupies 107–349 (KAVVLTFDDG…IQRVKDMQIS (243 aa)).

Belongs to the polysaccharide deacetylase family.

Its subcellular location is the cell outer membrane. Catalyzes the N-deacetylation of poly-beta-1,6-N-acetyl-D-glucosamine (PGA), a biofilm adhesin polysaccharide. N-deacetylation promotes PGA export through the PgaA porin. The chain is Poly-beta-1,6-N-acetyl-D-glucosamine N-deacetylase (pgaB) from Escherichia coli O157:H7.